Consider the following 201-residue polypeptide: Recombination protein RecR (201 aa).

The C4-type zinc-finger motif lies at 60 to 75; it reads CSRCGNVDTVDPCIVC. The region spanning 83-178 is the Toprim domain; the sequence is SVIIVVEDVS…KITRLAHGVP (96 aa).

It belongs to the RecR family.

Its function is as follows. May play a role in DNA repair. It seems to be involved in an RecBC-independent recombinational process of DNA repair. It may act with RecF and RecO. This chain is Recombination protein RecR, found in Rhizobium johnstonii (strain DSM 114642 / LMG 32736 / 3841) (Rhizobium leguminosarum bv. viciae).